The primary structure comprises 548 residues: Probable malate:quinone oxidoreductase (548 aa).

The tract at residues 521–548 (DKPQAADSTPKPQLKPQPVQKEVADIAL) is disordered. Over residues 530–541 (PKPQLKPQPVQK) the composition is skewed to low complexity.

This sequence belongs to the MQO family. It depends on FAD as a cofactor.

The catalysed reaction is (S)-malate + a quinone = a quinol + oxaloacetate. Its pathway is carbohydrate metabolism; tricarboxylic acid cycle; oxaloacetate from (S)-malate (quinone route): step 1/1. In Shigella boydii serotype 4 (strain Sb227), this protein is Probable malate:quinone oxidoreductase.